A 308-amino-acid chain; its full sequence is UDP-N-acetylenolpyruvoylglucosamine reductase 2 (308 aa).

The FAD-binding PCMH-type domain maps to 31–197 (RIGGPADYLV…AEVVMALRPA (167 aa)). Arg-176 is a catalytic residue. The Proton donor role is filled by Ser-226. Glu-296 is a catalytic residue.

Belongs to the MurB family. FAD is required as a cofactor.

It localises to the cytoplasm. It catalyses the reaction UDP-N-acetyl-alpha-D-muramate + NADP(+) = UDP-N-acetyl-3-O-(1-carboxyvinyl)-alpha-D-glucosamine + NADPH + H(+). It participates in cell wall biogenesis; peptidoglycan biosynthesis. Functionally, cell wall formation. The sequence is that of UDP-N-acetylenolpyruvoylglucosamine reductase 2 from Symbiobacterium thermophilum (strain DSM 24528 / JCM 14929 / IAM 14863 / T).